The chain runs to 185 residues: Ribosome-recycling factor (185 aa).

This sequence belongs to the RRF family.

The protein localises to the cytoplasm. Its function is as follows. Responsible for the release of ribosomes from messenger RNA at the termination of protein biosynthesis. May increase the efficiency of translation by recycling ribosomes from one round of translation to another. The protein is Ribosome-recycling factor of Listeria monocytogenes serovar 1/2a (strain ATCC BAA-679 / EGD-e).